Reading from the N-terminus, the 236-residue chain is Phosphoribosylaminoimidazole-succinocarboxamide synthase (236 aa).

The protein belongs to the SAICAR synthetase family.

The catalysed reaction is 5-amino-1-(5-phospho-D-ribosyl)imidazole-4-carboxylate + L-aspartate + ATP = (2S)-2-[5-amino-1-(5-phospho-beta-D-ribosyl)imidazole-4-carboxamido]succinate + ADP + phosphate + 2 H(+). It functions in the pathway purine metabolism; IMP biosynthesis via de novo pathway; 5-amino-1-(5-phospho-D-ribosyl)imidazole-4-carboxamide from 5-amino-1-(5-phospho-D-ribosyl)imidazole-4-carboxylate: step 1/2. In Campylobacter concisus (strain 13826), this protein is Phosphoribosylaminoimidazole-succinocarboxamide synthase.